Reading from the N-terminus, the 586-residue chain is Scavenger receptor cysteine-rich domain-containing group B protein (586 aa).

A disordered region spans residues 1-33 (MGPSERPSIGWTPKEAEMQIGPQPDGWSRGWKP). The signal sequence occupies residues 1 to 58 (MGPSERPSIGWTPKEAEMQIGPQPDGWSRGWKPGDRGAVPLPLSPALSFLLLFPLASA). SRCR domains follow at residues 69–169 (LRLV…VLCD), 200–300 (VRLV…VLCA), 355–455 (LRLV…ALCA), and 484–584 (LRLA…VLCQ). 12 disulfides stabilise this stretch: Cys94–Cys158, Cys107–Cys168, Cys138–Cys148, Cys225–Cys289, Cys238–Cys299, Cys269–Cys279, Cys380–Cys444, Cys393–Cys454, Cys424–Cys434, Cys509–Cys573, Cys522–Cys583, and Cys553–Cys563.

Its subcellular location is the secreted. This is Scavenger receptor cysteine-rich domain-containing group B protein from Mus musculus (Mouse).